The chain runs to 205 residues: Small ribosomal subunit protein uS4 (205 aa).

Residues 18 to 46 (NIWGRPKSPVNRREYGPGQHGQRRKGKLS) form a disordered region. The 64-residue stretch at 94–157 (RRLDTVVFRA…KQLAIVLEAT (64 aa)) folds into the S4 RNA-binding domain.

Belongs to the universal ribosomal protein uS4 family. In terms of assembly, part of the 30S ribosomal subunit. Contacts protein S5. The interaction surface between S4 and S5 is involved in control of translational fidelity.

Its function is as follows. One of the primary rRNA binding proteins, it binds directly to 16S rRNA where it nucleates assembly of the body of the 30S subunit. Functionally, with S5 and S12 plays an important role in translational accuracy. This Bradyrhizobium sp. (strain BTAi1 / ATCC BAA-1182) protein is Small ribosomal subunit protein uS4.